A 1011-amino-acid chain; its full sequence is Vacuolar membrane protease (1011 aa).

Residues 1-9 (MSNPFAFRS) lie on the Cytoplasmic side of the membrane. Residues 10-30 (AQVTFWTTVVYLALLVPLVVI) traverse the membrane as a helical segment. Residues 31 to 378 (NEGVPPVQPD…TFVLFGLRGM (348 aa)) lie on the Vacuolar side of the membrane. Residues asparagine 50 and asparagine 106 are each glycosylated (N-linked (GlcNAc...) asparagine). Zn(2+)-binding residues include histidine 159 and aspartate 171. Glutamate 205 functions as the Proton acceptor in the catalytic mechanism. Zn(2+) is bound by residues glutamate 206, glutamate 231, and histidine 304. Asparagine 331 carries an N-linked (GlcNAc...) asparagine glycan. Residues 379–399 (FAWSLTVLIVGPLTLFGMMYL) form a helical membrane-spanning segment. The Cytoplasmic segment spans residues 400 to 439 (VHKQGKGYAFHTKLRATSDSSSEDGDDEDGEVIRLGGWKG). The chain crosses the membrane as a helical span at residues 440-460 (FFRFPFALIVAGALVTGAALL). Residues 461–471 (LRKMNPFIIYS) are Vacuolar-facing. Residues 472–492 (SEYAVWAMMISLFYFGFWLIM) traverse the membrane as a helical segment. The Cytoplasmic portion of the chain corresponds to 493 to 505 (RGSSYTRPSALHR). Residues 506–526 (LYVHIWLFILGWVALVFATVL) form a helical membrane-spanning segment. Residues 527-536 (EDRMRIASGY) are Vacuolar-facing. A helical transmembrane segment spans residues 537–557 (IFVFWESQVFLATLVAVCELF). The Cytoplasmic portion of the chain corresponds to 558-682 (SLPRKIDFAR…WSGPMVTSTW (125 aa)). The segment covering 595-609 (EATSPQRAGQSSNSP) has biased composition (polar residues). 2 disordered regions span residues 595 to 627 (EATS…LFRK) and 650 to 671 (IMDS…EGEQ). A compositionally biased stretch (acidic residues) spans 610-622 (QEDDEDDVPDEET). The chain crosses the membrane as a helical span at residues 683–703 (ILQFLLLGPFMVILGGQVGLL). Topologically, residues 704–719 (LTSAVNQTGVDGSSLL) are vacuolar. Asparagine 709 carries N-linked (GlcNAc...) asparagine glycosylation. The chain crosses the membrane as a helical span at residues 720-740 (APYLMIAALSAILLMPLSPFI). The Cytoplasmic portion of the chain corresponds to 741-747 (HRVTKHV). Residues 748–768 (PLFLLAVAFATLIYSLVAFPF) form a helical membrane-spanning segment. Over 769–1011 (SPRAPYKTFF…LVEGSKAFKV (243 aa)) the chain is Vacuolar. Asparagine 872 carries an N-linked (GlcNAc...) asparagine glycan.

The protein belongs to the peptidase M28 family. It depends on Zn(2+) as a cofactor.

It localises to the vacuole membrane. Functionally, may be involved in vacuolar sorting and osmoregulation. The protein is Vacuolar membrane protease of Pyricularia oryzae (strain 70-15 / ATCC MYA-4617 / FGSC 8958) (Rice blast fungus).